The sequence spans 937 residues: Translation initiation factor IF-2 (937 aa).

Positions 47 to 352 (RAAFQTKATP…EMPQRKERPL (306 aa)) are disordered. Over residues 52 to 68 (TKATPAASKPATPAAPK) the composition is skewed to low complexity. Positions 97 to 116 (QHSNNRPQANANRNGQASNG) are enriched in polar residues. The segment covering 117–153 (QNRTNNARPNNNSARPNNSRPNTNSRPNNNSQNRSTS) has biased composition (low complexity). Residues 154–169 (ANHPMSLQEQISQANA) are compositionally biased toward polar residues. The segment covering 173–197 (RTQERIQQQREQREADEKKRREQAN) has biased composition (basic and acidic residues). Residues 202 to 229 (TRNNASNNRPSNGKPTNGARPTTNSPRP) are compositionally biased toward polar residues. Residues 240 to 269 (SSRPNNNNSARPNTTNNRPTNSRPATTPSR) are compositionally biased toward low complexity. Over residues 274–298 (QEMQQKMQANTVSASKPASNNTASK) the composition is skewed to polar residues. Over residues 322–331 (FNKKRKKTRK) the composition is skewed to basic residues. Positions 339–352 (AAKKEMPQRKERPL) are enriched in basic and acidic residues. The tr-type G domain occupies 438-607 (SRPPVVTIMG…LLEADVLELK (170 aa)). Positions 447 to 454 (GHVDHGKT) are G1. 447–454 (GHVDHGKT) is a GTP binding site. A G2 region spans residues 472 to 476 (GITQH). Residues 493 to 496 (DTPG) form a G3 region. GTP-binding positions include 493–497 (DTPGH) and 547–550 (NKID). Positions 547–550 (NKID) are G4. A G5 region spans residues 583 to 585 (SAK).

It belongs to the TRAFAC class translation factor GTPase superfamily. Classic translation factor GTPase family. IF-2 subfamily.

Its subcellular location is the cytoplasm. In terms of biological role, one of the essential components for the initiation of protein synthesis. Protects formylmethionyl-tRNA from spontaneous hydrolysis and promotes its binding to the 30S ribosomal subunits. Also involved in the hydrolysis of GTP during the formation of the 70S ribosomal complex. The chain is Translation initiation factor IF-2 from Latilactobacillus sakei subsp. sakei (strain 23K) (Lactobacillus sakei subsp. sakei).